The chain runs to 305 residues: Spermatogenesis-associated protein 4 (305 aa).

Residues 49–155 enclose the Calponin-homology (CH) domain; the sequence is SRLSRSVLRW…EEVYTLLTHR (107 aa).

In terms of tissue distribution, highly expressed in testis, the expression is observed precisely in seminiferous tubules.

It localises to the nucleus. Its function is as follows. May play a role in apoptosis regulation. This Homo sapiens (Human) protein is Spermatogenesis-associated protein 4 (SPATA4).